A 172-amino-acid polypeptide reads, in one-letter code: Arginine repressor (172 aa).

It belongs to the ArgR family.

The protein localises to the cytoplasm. The protein operates within amino-acid biosynthesis; L-arginine biosynthesis [regulation]. Regulates arginine biosynthesis genes. This chain is Arginine repressor, found in Bifidobacterium adolescentis (strain ATCC 15703 / DSM 20083 / NCTC 11814 / E194a).